The chain runs to 72 residues: MSLGVLAAAIAVGLGALGAGIANGLIVSRTIEGIARQPELRPVLQTTMFIGVALVEALPIIGVVFSFIYLGR.

The next 2 membrane-spanning stretches (helical) occupy residues 1 to 21 (MSLG…GAGI) and 48 to 68 (MFIG…FSFI).

It belongs to the ATPase C chain family. F-type ATPases have 2 components, F(1) - the catalytic core - and F(0) - the membrane proton channel. F(1) has five subunits: alpha(3), beta(3), gamma(1), delta(1), epsilon(1). F(0) has three main subunits: a(1), b(2) and c(10-14). The alpha and beta chains form an alternating ring which encloses part of the gamma chain. F(1) is attached to F(0) by a central stalk formed by the gamma and epsilon chains, while a peripheral stalk is formed by the delta and b chains.

It is found in the cell membrane. In terms of biological role, f(1)F(0) ATP synthase produces ATP from ADP in the presence of a proton or sodium gradient. F-type ATPases consist of two structural domains, F(1) containing the extramembraneous catalytic core and F(0) containing the membrane proton channel, linked together by a central stalk and a peripheral stalk. During catalysis, ATP synthesis in the catalytic domain of F(1) is coupled via a rotary mechanism of the central stalk subunits to proton translocation. Functionally, key component of the F(0) channel; it plays a direct role in translocation across the membrane. A homomeric c-ring of between 10-14 subunits forms the central stalk rotor element with the F(1) delta and epsilon subunits. The chain is ATP synthase subunit c from Geobacillus stearothermophilus (Bacillus stearothermophilus).